The following is a 318-amino-acid chain: 4-diphosphocytidyl-2-C-methyl-D-erythritol kinase (318 aa).

K25 is a catalytic residue. Residue 110-120 (PVAGGMAGGSA) participates in ATP binding. D152 is an active-site residue.

The protein belongs to the GHMP kinase family. IspE subfamily.

The enzyme catalyses 4-CDP-2-C-methyl-D-erythritol + ATP = 4-CDP-2-C-methyl-D-erythritol 2-phosphate + ADP + H(+). Its pathway is isoprenoid biosynthesis; isopentenyl diphosphate biosynthesis via DXP pathway; isopentenyl diphosphate from 1-deoxy-D-xylulose 5-phosphate: step 3/6. Its function is as follows. Catalyzes the phosphorylation of the position 2 hydroxy group of 4-diphosphocytidyl-2C-methyl-D-erythritol. The polypeptide is 4-diphosphocytidyl-2-C-methyl-D-erythritol kinase (Mycobacterium tuberculosis (strain ATCC 25177 / H37Ra)).